The chain runs to 101 residues: Small ribosomal subunit protein uS14 (101 aa).

It belongs to the universal ribosomal protein uS14 family. As to quaternary structure, part of the 30S ribosomal subunit. Contacts proteins S3 and S10.

Functionally, binds 16S rRNA, required for the assembly of 30S particles and may also be responsible for determining the conformation of the 16S rRNA at the A site. The chain is Small ribosomal subunit protein uS14 from Rhizobium johnstonii (strain DSM 114642 / LMG 32736 / 3841) (Rhizobium leguminosarum bv. viciae).